A 2729-amino-acid chain; its full sequence is 3-methylorcinaldehyde synthase (2729 aa).

Residues Leu99–Leu238 form an N-terminal acylcarrier protein transacylase domain (SAT) region. The span at Ser361–Gly373 shows a compositional bias: polar residues. Residues Ser361–His391 form a disordered region. Positions Asp397–Gln828 constitute a Ketosynthase family 3 (KS3) domain. Active-site for beta-ketoacyl synthase activity residues include Cys571, His706, and His748. Positions Phe942–Val1230 are malonyl-CoA:ACP transacylase (MAT) domain. Ser1029 serves as the catalytic For acyl/malonyl transferase activity. The interval Glu1345–Asp1479 is N-terminal hotdog fold. The PKS/mFAS DH domain occupies Glu1345 to Glu1669. Residues Lys1374–Arg1665 are product template (PT) domain. Residue His1380 is the Proton acceptor; for dehydratase activity of the active site. Residues Asp1513 to Glu1669 are C-terminal hotdog fold. The active-site Proton donor; for dehydratase activity is the Asp1575. Over residues Ala1682 to Ala1701 the composition is skewed to low complexity. The tract at residues Ala1682–Gly1726 is disordered. The segment covering Thr1707–Gly1716 has biased composition (polar residues). The Carrier domain occupies Gln1750–Leu1824. Ser1784 is subject to O-(pantetheine 4'-phosphoryl)serine. Residues Thr1835–Ser1868 show a composition bias toward low complexity. Residues Thr1835–Met1874 form a disordered region. The interval Glu2086–Thr2254 is methyltransferase (C-MeT) domain. The interval Ile2344–Arg2599 is reductase (R) domain.

It functions in the pathway secondary metabolite biosynthesis; terpenoid biosynthesis. Functionally, non-reducing polyketide synthase; part of the gene cluster that mediates the biosynthesis of xenovulene A, an unusual meroterpenoid that has potent inhibitory effects on the human gamma-aminobutyrate A (GABAA) benzodiazepine receptor. The first step of xenovulene A biosynthesis is the biosynthesis of 3-methylorcinaldehyde performed by the non-reducing polyketide synthase aspks1. The salicylate hydroxylase asL1 then catalyzes the oxidative dearomatization of 3-methylorcinaldehyde to yield a dearomatized hydroxycyclohexadione. The 2-oxoglutarate-dependent dioxygenase asL3 further catalyzes the oxidative ring expansion to provide the first tropolone metabolite. The cytochrome P450 monooxygenase asR2 allows the synthesis of tropolone hemiacetal. In parallel, a previously unrecognised class of terpene cyclase, asR6, produces alpha-humulene from farnesylpyrophosphate (FPP). The putative Diels-Alderase asR5 probably catalyzes the formation of the tropolone-humulene skeleton by linking humulene and the polyketide moiety. Oxidative-ring contractions catalyzed by asL4 and asL6 then processively remove carbon atoms from the polyketide to yield xenovulene A. The sequence is that of 3-methylorcinaldehyde synthase from Sarocladium schorii (Acremonium strictum (strain IMI 501407)).